Here is a 465-residue protein sequence, read N- to C-terminus: Cysteine--tRNA ligase (465 aa).

Cys30 is a binding site for Zn(2+). The short motif at 32–42 is the 'HIGH' region element; that stretch reads ITVYDYCHVGH. Cys214, His239, and Glu243 together coordinate Zn(2+). Positions 271-275 match the 'KMSKS' region motif; the sequence is KMSKS. Lys274 is a binding site for ATP.

It belongs to the class-I aminoacyl-tRNA synthetase family. In terms of assembly, monomer. It depends on Zn(2+) as a cofactor.

The protein resides in the cytoplasm. It catalyses the reaction tRNA(Cys) + L-cysteine + ATP = L-cysteinyl-tRNA(Cys) + AMP + diphosphate. The chain is Cysteine--tRNA ligase from Burkholderia multivorans (strain ATCC 17616 / 249).